A 223-amino-acid chain; its full sequence is Glycerol-3-phosphate acyltransferase (223 aa).

5 consecutive transmembrane segments (helical) span residues 2-22 (LEIL…GLVI), 52-72 (WGVA…WLAF), 78-98 (PVFV…SCFM), 112-132 (IFLP…MLVI), and 153-173 (LAVS…AVVV). Residues 191–223 (WLKSKNKGAAAGNAAEGDDTQNMNPQDAGRKDG) form a disordered region.

This sequence belongs to the PlsY family. In terms of assembly, probably interacts with PlsX.

It is found in the cell inner membrane. The enzyme catalyses an acyl phosphate + sn-glycerol 3-phosphate = a 1-acyl-sn-glycero-3-phosphate + phosphate. It participates in lipid metabolism; phospholipid metabolism. In terms of biological role, catalyzes the transfer of an acyl group from acyl-phosphate (acyl-PO(4)) to glycerol-3-phosphate (G3P) to form lysophosphatidic acid (LPA). This enzyme utilizes acyl-phosphate as fatty acyl donor, but not acyl-CoA or acyl-ACP. This Desulfovibrio desulfuricans (strain ATCC 27774 / DSM 6949 / MB) protein is Glycerol-3-phosphate acyltransferase.